The primary structure comprises 510 residues: Beta-galactosidase (510 aa).

Glu210 functions as the Proton donor in the catalytic mechanism. The active-site Nucleophile is the Glu414.

The protein belongs to the glycosyl hydrolase 1 family.

The enzyme catalyses Hydrolysis of terminal non-reducing beta-D-galactose residues in beta-D-galactosides.. The chain is Beta-galactosidase from Pyrococcus woesei.